The chain runs to 124 residues: Large ribosomal subunit protein bL12 (124 aa).

The protein belongs to the bacterial ribosomal protein bL12 family. As to quaternary structure, homodimer. Part of the ribosomal stalk of the 50S ribosomal subunit. Forms a multimeric L10(L12)X complex, where L10 forms an elongated spine to which 2 to 4 L12 dimers bind in a sequential fashion. Binds GTP-bound translation factors.

In terms of biological role, forms part of the ribosomal stalk which helps the ribosome interact with GTP-bound translation factors. Is thus essential for accurate translation. The chain is Large ribosomal subunit protein bL12 from Christiangramia forsetii (strain DSM 17595 / CGMCC 1.15422 / KT0803) (Gramella forsetii).